Reading from the N-terminus, the 1115-residue chain is Carbamoyl phosphate synthase large chain (1115 aa).

A carboxyphosphate synthetic domain region spans residues 1-407; the sequence is MPRRTDLHHV…ALGKVMRSLE (407 aa). Residues Arg-134, Arg-174, Gly-180, Gly-181, Glu-213, Ile-215, Glu-220, Gly-246, Val-247, His-248, Gln-290, and Glu-304 each contribute to the ATP site. The ATP-grasp 1 domain occupies 138-333; that stretch reads KDIVAKAGGE…IAKIAAKLAI (196 aa). Residues Gln-290, Glu-304, and Asn-306 each contribute to the Mg(2+) site. Residues Gln-290, Glu-304, and Asn-306 each coordinate Mn(2+). An oligomerization domain region spans residues 408-559; sequence TTRAGFWTAP…ELDPAAETEV (152 aa). Residues 560–965 form a carbamoyl phosphate synthetic domain region; the sequence is APQTERPKVL…AFAKSQTAAY (406 aa). The region spanning 693-884 is the ATP-grasp 2 domain; sequence GDLLSAAGLP…LAKACARIML (192 aa). ATP contacts are provided by Arg-729, Arg-768, Leu-770, Glu-775, Gly-800, Ile-801, His-802, Ser-803, Gln-843, and Glu-855. Gln-843, Glu-855, and Asn-857 together coordinate Mg(2+). Positions 843, 855, and 857 each coordinate Mn(2+). The region spanning 966-1113 is the MGS-like domain; it reads GSLPAQGTVF…QELHRVIGGV (148 aa). The segment at 966–1115 is allosteric domain; it reads GSLPAQGTVF…LHRVIGGVER (150 aa).

This sequence belongs to the CarB family. In terms of assembly, composed of two chains; the small (or glutamine) chain promotes the hydrolysis of glutamine to ammonia, which is used by the large (or ammonia) chain to synthesize carbamoyl phosphate. Tetramer of heterodimers (alpha,beta)4. Mg(2+) serves as cofactor. Mn(2+) is required as a cofactor.

It catalyses the reaction hydrogencarbonate + L-glutamine + 2 ATP + H2O = carbamoyl phosphate + L-glutamate + 2 ADP + phosphate + 2 H(+). The enzyme catalyses hydrogencarbonate + NH4(+) + 2 ATP = carbamoyl phosphate + 2 ADP + phosphate + 2 H(+). It functions in the pathway amino-acid biosynthesis; L-arginine biosynthesis; carbamoyl phosphate from bicarbonate: step 1/1. Its pathway is pyrimidine metabolism; UMP biosynthesis via de novo pathway; (S)-dihydroorotate from bicarbonate: step 1/3. In terms of biological role, large subunit of the glutamine-dependent carbamoyl phosphate synthetase (CPSase). CPSase catalyzes the formation of carbamoyl phosphate from the ammonia moiety of glutamine, carbonate, and phosphate donated by ATP, constituting the first step of 2 biosynthetic pathways, one leading to arginine and/or urea and the other to pyrimidine nucleotides. The large subunit (synthetase) binds the substrates ammonia (free or transferred from glutamine from the small subunit), hydrogencarbonate and ATP and carries out an ATP-coupled ligase reaction, activating hydrogencarbonate by forming carboxy phosphate which reacts with ammonia to form carbamoyl phosphate. This chain is Carbamoyl phosphate synthase large chain, found in Mycobacterium tuberculosis (strain CDC 1551 / Oshkosh).